A 503-amino-acid polypeptide reads, in one-letter code: Na(+)-translocating NADH-quinone reductase subunit B (503 aa).

4 helical membrane-spanning segments follow: residues 55 to 75, 120 to 142, 161 to 181, and 186 to 206; these read MILVVVALFPATFSAIWNSGV, IFLPLLIISYSVGGACEVLFAVI, TLPPTIPYWMAALGIAFGVVV, and FGGTGMNILNPALSGRAFLFF. FMN phosphoryl threonine is present on threonine 248. A run of 5 helical transmembrane segments spans residues 361-381, 387-407, 417-437, 452-472, and 475-495; these read TSTFACLLGAIFLIVTGIASW, FGIGAFVTAWLFKIVSILIVG, FFIPAYRQLFLGGLAFGLVFM, WIYGLFIGFMTILIRLINPAY, and GVMLAILLGNVFAPLLDYFAV.

It belongs to the NqrB/RnfD family. Composed of six subunits; NqrA, NqrB, NqrC, NqrD, NqrE and NqrF. FMN serves as cofactor.

It is found in the cell inner membrane. It catalyses the reaction a ubiquinone + n Na(+)(in) + NADH + H(+) = a ubiquinol + n Na(+)(out) + NAD(+). Its function is as follows. NQR complex catalyzes the reduction of ubiquinone-1 to ubiquinol by two successive reactions, coupled with the transport of Na(+) ions from the cytoplasm to the periplasm. NqrA to NqrE are probably involved in the second step, the conversion of ubisemiquinone to ubiquinol. This Chlamydia felis (strain Fe/C-56) (Chlamydophila felis) protein is Na(+)-translocating NADH-quinone reductase subunit B.